Here is a 159-residue protein sequence, read N- to C-terminus: Ribosomal RNA large subunit methyltransferase H (159 aa).

S-adenosyl-L-methionine contacts are provided by residues leucine 76, glycine 108, and 127-132 (FGKLTM).

It belongs to the RNA methyltransferase RlmH family. As to quaternary structure, homodimer.

The protein localises to the cytoplasm. It carries out the reaction pseudouridine(1915) in 23S rRNA + S-adenosyl-L-methionine = N(3)-methylpseudouridine(1915) in 23S rRNA + S-adenosyl-L-homocysteine + H(+). In terms of biological role, specifically methylates the pseudouridine at position 1915 (m3Psi1915) in 23S rRNA. The polypeptide is Ribosomal RNA large subunit methyltransferase H (Lactobacillus delbrueckii subsp. bulgaricus (strain ATCC 11842 / DSM 20081 / BCRC 10696 / JCM 1002 / NBRC 13953 / NCIMB 11778 / NCTC 12712 / WDCM 00102 / Lb 14)).